Reading from the N-terminus, the 401-residue chain is Aspartate aminotransferase, mitochondrial (401 aa).

Thr19 carries the post-translational modification Phosphothreonine. Lys30 is modified (N6-acetyllysine). Residue Gly36 coordinates substrate. Lys44 is modified (N6-acetyllysine; alternate). Lys44 is modified (N6-succinyllysine; alternate). Lys53 is subject to N6-acetyllysine. The residue at position 61 (Lys61) is an N6-acetyllysine; alternate. At Lys61 the chain carries N6-succinyllysine; alternate. Tyr67 bears the 3'-nitrotyrosine; alternate mark. The residue at position 67 (Tyr67) is a Phosphotyrosine; alternate. 3 positions are modified to N6-acetyllysine; alternate: Lys78, Lys93, and Lys130. Lys78, Lys93, and Lys130 each carry N6-succinyllysine; alternate. Trp133 is a substrate binding site. Residue Lys156 is modified to N6-acetyllysine; alternate. The residue at position 156 (Lys156) is an N6-succinyllysine; alternate. A substrate-binding site is contributed by Asn186. Lys198 carries the N6-succinyllysine modification. Lys205 is subject to N6-acetyllysine. N6-acetyllysine; alternate is present on residues Lys250 and Lys267. Lys250 bears the N6-(pyridoxal phosphate)lysine; alternate mark. Lys267 bears the N6-succinyllysine; alternate mark. At Lys273 the chain carries N6-acetyllysine. Lys280 is modified (N6-acetyllysine; alternate). An N6-succinyllysine; alternate modification is found at Lys280. Arg284 is modified (asymmetric dimethylarginine). Position 309 is an N6-acetyllysine; alternate (Lys309). Lys309 carries the N6-succinyllysine; alternate modification. Lys316 is modified (N6-acetyllysine). Position 334 is an N6-acetyllysine; alternate (Lys334). An N6-succinyllysine; alternate modification is found at Lys334. N6-acetyllysine occurs at positions 335 and 358. N6-acetyllysine; alternate occurs at positions 367 and 375. An N6-succinyllysine; alternate mark is found at Lys367 and Lys375. Residue Arg378 participates in substrate binding.

The protein belongs to the class-I pyridoxal-phosphate-dependent aminotransferase family. Homodimer. Requires pyridoxal 5'-phosphate as cofactor.

The protein localises to the mitochondrion matrix. The protein resides in the cell membrane. It catalyses the reaction L-aspartate + 2-oxoglutarate = oxaloacetate + L-glutamate. The enzyme catalyses L-kynurenine + 2-oxoglutarate = kynurenate + L-glutamate + H2O. Its function is as follows. Catalyzes the irreversible transamination of the L-tryptophan metabolite L-kynurenine to form kynurenic acid (KA). As a member of the malate-aspartate shuttle, it has a key role in the intracellular NAD(H) redox balance. Is important for metabolite exchange between mitochondria and cytosol, and for amino acid metabolism. Facilitates cellular uptake of long-chain free fatty acids. In Equus caballus (Horse), this protein is Aspartate aminotransferase, mitochondrial (GOT2).